The sequence spans 300 residues: Protoheme IX farnesyltransferase (300 aa).

9 helical membrane passes run 26–46 (VVQL…PGLP), 54–74 (IAWA…FNCI), 102–122 (LLFS…LVNP), 123–143 (LTMW…TLIL), 150–170 (NIVI…AAMT), 177–197 (ALIL…ALAL), 224–244 (VLLY…YGMS), 246–266 (WPYL…GFAL), and 279–299 (FRFS…DHYL).

This sequence belongs to the UbiA prenyltransferase family. Protoheme IX farnesyltransferase subfamily.

It localises to the cell inner membrane. The catalysed reaction is heme b + (2E,6E)-farnesyl diphosphate + H2O = Fe(II)-heme o + diphosphate. It functions in the pathway porphyrin-containing compound metabolism; heme O biosynthesis; heme O from protoheme: step 1/1. In terms of biological role, converts heme B (protoheme IX) to heme O by substitution of the vinyl group on carbon 2 of heme B porphyrin ring with a hydroxyethyl farnesyl side group. The sequence is that of Protoheme IX farnesyltransferase from Verminephrobacter eiseniae (strain EF01-2).